The primary structure comprises 481 residues: MQQNEKASLNTSAAAAKAGSYTGYADVYDFWYYHQRGDGLTVNGKPSYTTDKAVSEGLTRPHTTWNGDNVFGKAANLTYSFLNTFSSTPNGHTGPVKFTPVQMQQAKLSLQSWADAANLTFTEVSPNQKANITFANYTRNADGSLNTDTQAYAAYPGTHPVSGSAWFNYNQSSIRNPDTDEYGRHSFTHEIGHALGLSHPAEYNAGEGDISYKNSAAYAEDSRQFSIMSYWEVENTGGDFKGHYSAGPLMDDIAAIQKLYGANMTTRTGDTVYGFNSNTDRDFYTATNSSKALVFSVWDAGGTDTFDFSGYSNNQRINLNEGSFSDVGGLKGNVSIAHGVTIENAIGGSGNDILIGNGADNILQGGAGDDVLYGSTGADTLTGGAGRDIFVYGSGQDSTVSAYDWITDFQTGIDKIDLSAFRNEGQLSFVQDQFTGKGQEVMLQWDAANSTTNLWLHEAGHSSVDFLVRIVGQTAQSDIIV.

A propeptide spanning residues 1 to 15 (MQQNEKASLNTSAAA) is cleaved from the precursor. Position 189 (His-189) interacts with Zn(2+). Glu-190 is a catalytic residue. Zn(2+)-binding residues include His-193 and Tyr-230. Ca(2+)-binding residues include Arg-267, Gly-269, Thr-271, Asp-299, Gly-301, Gly-302, Asp-304, Thr-341, Glu-343, Gly-348, Gly-350, Asp-352, Asn-357, Ala-359, Asn-361, Gly-365, Gly-366, Ala-367, Gly-368, Asp-370, Gly-374, Gly-377, Asp-379, Gly-383, Gly-384, Ala-385, Gly-386, Asp-388, Asp-397, Asp-404, and Asp-414. Hemolysin-type calcium-binding repeat units lie at residues 346-363 (IGGSGNDILIGNGADNIL), 364-381 (QGGAGDDVLYGSTGADTL), and 382-399 (TGGAGRDIFVYGSGQDST).

It belongs to the peptidase M10B family. Requires Ca(2+) as cofactor. It depends on Zn(2+) as a cofactor.

It is found in the secreted. It catalyses the reaction Preferential cleavage of bonds with hydrophobic residues in P1'.. In Dickeya chrysanthemi (Pectobacterium chrysanthemi), this protein is Serralysin B (prtB).